The primary structure comprises 544 residues: Dynein intermediate chain 1 (544 aa).

6 WD repeats span residues 241 to 281 (KARS…YPVS), 289 to 330 (GHLE…RPSE), 342 to 387 (SQCI…QPSN), 402 to 441 (VMTS…NQHE), 461 to 501 (THKA…EAPV), and 506 to 544 (PDGK…NLAN).

This sequence belongs to the dynein intermediate chain family.

The protein localises to the cytoplasm. Its function is as follows. Has a role in meiotic nuclear divsion where it promotes the movement of 'horsetails'. The polypeptide is Dynein intermediate chain 1 (dic1) (Schizosaccharomyces pombe (strain 972 / ATCC 24843) (Fission yeast)).